Reading from the N-terminus, the 238-residue chain is tRNA1(Val) (adenine(37)-N6)-methyltransferase (238 aa).

It belongs to the methyltransferase superfamily. tRNA (adenine-N(6)-)-methyltransferase family.

The protein resides in the cytoplasm. It carries out the reaction adenosine(37) in tRNA1(Val) + S-adenosyl-L-methionine = N(6)-methyladenosine(37) in tRNA1(Val) + S-adenosyl-L-homocysteine + H(+). Functionally, specifically methylates the adenine in position 37 of tRNA(1)(Val) (anticodon cmo5UAC). This is tRNA1(Val) (adenine(37)-N6)-methyltransferase from Shewanella baltica (strain OS223).